The chain runs to 108 residues: uncharacterized protein (108 aa).

3 consecutive transmembrane segments (helical) span residues 10–32 (SLCYFSVFIAPIIVPIVAYFVVN), 45–67 (ISHIVPFVGWLFLFIALLGGAVA), and 77–99 (FVIIGGAVIYFLVVIGIIIWNVI).

The protein resides in the cell membrane. This is an uncharacterized protein from Bacillus subtilis (strain 168).